We begin with the raw amino-acid sequence, 140 residues long: Sex-regulated protein janus-B (140 aa).

Residue R42 coordinates substrate. Catalysis depends on H69, which acts as the Proton acceptor. 110–112 (SRT) provides a ligand contact to substrate.

It belongs to the janus family.

Its function is as follows. JanA and janB regulate somatic sex differentiation. The protein is Sex-regulated protein janus-B (janB) of Drosophila sechellia (Fruit fly).